The sequence spans 533 residues: Hydroxylamine reductase (533 aa).

Positions 3, 6, 15, and 21 each coordinate [4Fe-4S] cluster. Histidine 234, glutamate 258, cysteine 302, cysteine 389, cysteine 417, cysteine 442, glutamate 476, and lysine 478 together coordinate hybrid [4Fe-2O-2S] cluster. Cysteine persulfide is present on cysteine 389.

This sequence belongs to the HCP family. [4Fe-4S] cluster serves as cofactor. The cofactor is hybrid [4Fe-2O-2S] cluster.

The protein localises to the cytoplasm. The catalysed reaction is A + NH4(+) + H2O = hydroxylamine + AH2 + H(+). Catalyzes the reduction of hydroxylamine to form NH(3) and H(2)O. This chain is Hydroxylamine reductase, found in Maridesulfovibrio salexigens (strain ATCC 14822 / DSM 2638 / NCIMB 8403 / VKM B-1763) (Desulfovibrio salexigens).